Here is a 323-residue protein sequence, read N- to C-terminus: tRNA-dihydrouridine(16) synthase (323 aa).

Residues 7-9 and Gln68 each bind FMN; that span reads PME. Cys98 acts as the Proton donor in catalysis. FMN is bound by residues Lys139, 199 to 201, and 223 to 224; these read NGE and GR.

The protein belongs to the Dus family. DusC subfamily. Requires FMN as cofactor.

The enzyme catalyses 5,6-dihydrouridine(16) in tRNA + NADP(+) = uridine(16) in tRNA + NADPH + H(+). The catalysed reaction is 5,6-dihydrouridine(16) in tRNA + NAD(+) = uridine(16) in tRNA + NADH + H(+). Its function is as follows. Catalyzes the synthesis of 5,6-dihydrouridine (D), a modified base found in the D-loop of most tRNAs, via the reduction of the C5-C6 double bond in target uridines. Specifically modifies U16 in tRNAs. This chain is tRNA-dihydrouridine(16) synthase, found in Pseudomonas putida (strain ATCC 47054 / DSM 6125 / CFBP 8728 / NCIMB 11950 / KT2440).